A 218-amino-acid chain; its full sequence is Capsid protein (218 aa).

Met1 bears the N-acetylmethionine; by host mark. A disordered region spans residues 1 to 29 (MDKSESTSAGRNHRRRPRRGSRSAPSSAD). Residues 11-21 (RNHRRRPRRGS) show a composition bias toward basic residues.

Belongs to the cucumovirus capsid protein family.

The protein localises to the virion. In terms of biological role, capsid protein. Probably binds RNA and plays a role in packaging. This Cucumber mosaic virus (strain C) (CMV) protein is Capsid protein.